The chain runs to 390 residues: S-adenosylmethionine synthase 3 (390 aa).

E9 provides a ligand contact to Mg(2+). H15 is a binding site for ATP. E43 serves as a coordination point for K(+). L-methionine is bound by residues E56 and Q99. ATP is bound by residues D167–K169, S235–F238, D246, R252–K253, A269, K273, and K277. D246 serves as a coordination point for L-methionine. Residue K277 participates in L-methionine binding.

It belongs to the AdoMet synthase family. In terms of assembly, homotetramer. Interacts with GRF3. Requires Mn(2+) as cofactor. Mg(2+) is required as a cofactor. It depends on Co(2+) as a cofactor. The cofactor is K(+).

Its subcellular location is the cytoplasm. The enzyme catalyses L-methionine + ATP + H2O = S-adenosyl-L-methionine + phosphate + diphosphate. It participates in amino-acid biosynthesis; S-adenosyl-L-methionine biosynthesis; S-adenosyl-L-methionine from L-methionine: step 1/1. Its activity is regulated as follows. Inhibited by 5,5'-dithiobis-2-nitrobenzoic acid (DTNB) and N-ethylmaleimide (NEM) (in vitro). Its function is as follows. Catalyzes the formation of S-adenosylmethionine from methionine and ATP. The reaction comprises two steps that are both catalyzed by the same enzyme: formation of S-adenosylmethionine (AdoMet) and triphosphate, and subsequent hydrolysis of the triphosphate. Involved in the biosynthesis of lignin. The chain is S-adenosylmethionine synthase 3 (METK3) from Arabidopsis thaliana (Mouse-ear cress).